A 387-amino-acid polypeptide reads, in one-letter code: F-box/LRR-repeat/kelch-repeat protein At2g29770 (387 aa).

Residues 1 to 34 (MVFISETSDDGSNGGDPTKNPQEEEEENLPPIPQ) are disordered. One can recognise an F-box domain in the interval 31-78 (PIPQGIPDELIESTVLLIRRCHYPTLSLLSKTFRRVISSSELYKSRFI). Residues 105 to 128 (CNIPRNISLHLREIKSLPPLNHGS) form an LRR 1 repeat. Kelch repeat units follow at residues 136-183 (HMYV…VIDG) and 184-231 (RIYV…FVTS). The LRR 2 repeat unit spans residues 196-219 (DHWIEVFDIENRIWSSVPHHRYCN).

This Arabidopsis thaliana (Mouse-ear cress) protein is F-box/LRR-repeat/kelch-repeat protein At2g29770.